A 651-amino-acid polypeptide reads, in one-letter code: Bromodomain-containing protein 7 (651 aa).

Lysine 21 is covalently cross-linked (Glycyl lysine isopeptide (Lys-Gly) (interchain with G-Cter in SUMO2)). Polar residues predominate over residues 35-45 (TELSTGSSGHD). Residues 35 to 132 (TELSTGSSGH…SSLAKQEEVE (98 aa)) form a disordered region. The segment covering 47 to 57 (SLFEDKNDHDK) has biased composition (basic and acidic residues). Lysine 52 is covalently cross-linked (Glycyl lysine isopeptide (Lys-Gly) (interchain with G-Cter in SUMO2)). Basic residues predominate over residues 58-69 (HKDRKRKKRKKG). The short motif at 65 to 96 (KRKKGEKQIPGEEKGRKRRRVKEDKKKRDRDR) is the Nuclear localization signal element. The span at 70 to 106 (EKQIPGEEKGRKRRRVKEDKKKRDRDRVENEAEKDLQ) shows a compositional bias: basic and acidic residues. Glycyl lysine isopeptide (Lys-Gly) (interchain with G-Cter in SUMO2) cross-links involve residues lysine 127, lysine 186, lysine 197, lysine 201, lysine 212, and lysine 241. A Bromo domain is found at 131–235 (VEQTPLQEAL…HSGMKILSQE (105 aa)). The segment at 253–312 (TRKQKDGTDTSQSGEDGGCWQREREDSGDAEAHASKSPSKENKKKDNDMLEDKFKSNNLE) is disordered. Positions 273 to 312 (QREREDSGDAEAHASKSPSKENKKKDNDMLEDKFKSNNLE) are enriched in basic and acidic residues. Phosphoserine is present on residues serine 279 and serine 289. Glycyl lysine isopeptide (Lys-Gly) (interchain with G-Cter in SUMO2) cross-links involve residues lysine 305 and lysine 307. The residue at position 328 (lysine 328) is an N6-acetyllysine. Lysine 344 participates in a covalent cross-link: Glycyl lysine isopeptide (Lys-Gly) (interchain with G-Cter in SUMO2). Residue serine 380 is modified to Phosphoserine. Lysine 389 is covalently cross-linked (Glycyl lysine isopeptide (Lys-Gly) (interchain with G-Cter in SUMO2)). At serine 482 the chain carries Phosphoserine. Threonine 514 carries the post-translational modification Phosphothreonine. Positions 536-567 (SEEAEIFQKKLDETTRLLRELQEAQNERLSTR) form a coiled coil. Position 621 is a phosphoserine (serine 621).

As to quaternary structure, interacts with TRIM24, PTPN13 and DVL1. Identified in a complex with SMARCA4/BRG1, SMARCC1/BAF155, SMARCE1/BAF57, DPF2/BAF45D and ARID2, subunits of the SWI/SNF-B (PBAF) chromatin remodeling complex. Interacts with IRF2 and HNRPUL1. Interacts (via N-terminus) with TP53. Interacts (via C-terminus) with EP300. Interacts with BRCA1. Interacts (via bromo domain) with histone H3 (via N-terminus) acetylated at 'Lys-14' (H3K14ac). Has low affinity for histone H3 acetylated at 'Lys-9' (H3K9ac). Has the highest affinity for histone H3 that is acetylated both at 'Lys-9' (H3K9ac) and at 'Lys-14' (H3K14ac). Has very low affinity for non-acetylated histone H3. Interacts (via bromo domain) with histone H4 (via N-terminus) acetylated at 'Lys-8' (H3K8ac) (in vitro).

The protein localises to the nucleus. Its subcellular location is the chromosome. Acts both as coactivator and as corepressor. May play a role in chromatin remodeling. Activator of the Wnt signaling pathway in a DVL1-dependent manner by negatively regulating the GSK3B phosphotransferase activity. Induces dephosphorylation of GSK3B at 'Tyr-216'. Down-regulates TRIM24-mediated activation of transcriptional activation by AR. Transcriptional corepressor that down-regulates the expression of target genes. Binds to target promoters, leading to increased histone H3 acetylation at 'Lys-9' (H3K9ac). Binds to the ESR1 promoter. Recruits BRCA1 and POU2F1 to the ESR1 promoter. Coactivator for TP53-mediated activation of transcription of a set of target genes. Required for TP53-mediated cell-cycle arrest in response to oncogene activation. Promotes acetylation of TP53 at 'Lys-382', and thereby promotes efficient recruitment of TP53 to target promoters. Inhibits cell cycle progression from G1 to S phase. This Pongo abelii (Sumatran orangutan) protein is Bromodomain-containing protein 7 (BRD7).